Here is a 953-residue protein sequence, read N- to C-terminus: ATP-dependent 6-phosphofructokinase (953 aa).

Positions 1–558 are N-terminal catalytic PFK domain 1; that stretch reads MIEGISFASF…QLQGFLLTNS (558 aa). Residues Gly-193, 256-257, and 286-289 each bind ATP; these read RC and GDGS. Position 287 (Asp-287) interacts with Mg(2+). Residues 332–334, Arg-369, 376–378, Glu-433, Arg-460, and 466–469 each bind substrate; these read SID, MGR, and HVQR. Asp-334 functions as the Proton acceptor in the catalytic mechanism. Residues 559–572 are interdomain linker; it reads ADKDRPQEPAKDPL. Positions 573–953 are C-terminal regulatory PFK domain 2; that stretch reads RVAIVCTGAP…AKEQGIIDPC (381 aa). Beta-D-fructose 2,6-bisphosphate-binding positions include Arg-645, 702 to 706, Arg-740, 747 to 749, Glu-807, Arg-833, 839 to 842, and Arg-906; these read TISNN, QGG, and HVQQ.

The protein belongs to the phosphofructokinase type A (PFKA) family. ATP-dependent PFK group I subfamily. Eukaryotic two domain clade 'E' sub-subfamily. As to quaternary structure, heterooctamer of 4 alpha and 4 beta chains. Requires Mg(2+) as cofactor.

It is found in the cytoplasm. The catalysed reaction is beta-D-fructose 6-phosphate + ATP = beta-D-fructose 1,6-bisphosphate + ADP + H(+). The protein operates within carbohydrate degradation; glycolysis; D-glyceraldehyde 3-phosphate and glycerone phosphate from D-glucose: step 3/4. Allosterically activated by ADP, AMP, or fructose 2,6-bisphosphate, and allosterically inhibited by ATP or citrate. Catalyzes the phosphorylation of D-fructose 6-phosphate to fructose 1,6-bisphosphate by ATP, the first committing step of glycolysis. The polypeptide is ATP-dependent 6-phosphofructokinase (PFK1) (Yarrowia lipolytica (strain CLIB 122 / E 150) (Yeast)).